A 272-amino-acid polypeptide reads, in one-letter code: Undecaprenyl-diphosphatase (272 aa).

The next 7 helical transmembrane spans lie at 39-59 (SGLTFDVALHFGTFLAIFVYF), 87-107 (WMIVLASIPAAIAGKTLEQPI), 113-133 (SSPLMIALMLILFGLGLGLTD), 145-165 (ITLGTAMLVGCFQCLALVPGV), 188-208 (FSFLLSLPIVFGAALLKGLHL), 220-240 (PMLVGVAVSAVVGYISVAFLL), and 251-271 (FVWYRVAAGIGVMALLGVGLL).

It belongs to the UppP family.

The protein resides in the cell inner membrane. The enzyme catalyses di-trans,octa-cis-undecaprenyl diphosphate + H2O = di-trans,octa-cis-undecaprenyl phosphate + phosphate + H(+). Its function is as follows. Catalyzes the dephosphorylation of undecaprenyl diphosphate (UPP). Confers resistance to bacitracin. The polypeptide is Undecaprenyl-diphosphatase (Trichlorobacter lovleyi (strain ATCC BAA-1151 / DSM 17278 / SZ) (Geobacter lovleyi)).